The chain runs to 356 residues: MEAIKQKRSLISLKESFIYPHEWNHEPCDNKFILECFKESVNLGIFQIDDKKSFSYINSCLSSCAYMWPLCNHSQSLMTGRFIQWSFLIDDYLDSLEIDDKKTDSTVLNVEKALINGTITNKNSKLEEYTVFFRNKLFEYCGRERLDAFNLLINELVICLWTLVPFSKIHSKEKDFYPSYQLYRCIRTINVGIIACCALNFILFKDLDVKLWLNPRFRKILNRASIQISIVNDAVSYAKEILNENAYCNTFYFLQKDSTKFSTFDQVCEYLFNEANTYIKDIITDEPLLLHEFEDVEDRKVVQSLLNHVHYLISGNFVWSIENNQRYQSNIYFINLLQSTGKSIGSSWSNIKTFFR.

Positions 90-95 match the DDxx(x)D/E motif motif; the sequence is DDYLDS. An NDxxSxxxD/E motif motif is present at residues 232 to 240; it reads NDAVSYAKE.

It belongs to the terpene synthase family.

It carries out the reaction geranylgeranyl diphosphate = beta-araneosene + diphosphate. Terpene synthase that converts its substrate farnesyl diphosphate (FPP) into several unidentified sesquiterpenes. TPS10 also converts geranylgeranyl diphosphate (GGPP) into the diterpene beta-araneosene. This chain is Terpene synthase 10, found in Dictyostelium purpureum (Slime mold).